Consider the following 503-residue polypeptide: Cytochrome P450 11B1, mitochondrial (503 aa).

The transit peptide at 1–24 (MAIWAKAEAWLAGPWLALNRARTL) directs the protein to the mitochondrion. Cysteine 450 is a heme binding site.

This sequence belongs to the cytochrome P450 family. Requires heme as cofactor.

It is found in the mitochondrion inner membrane. The enzyme catalyses a steroid + 2 reduced [adrenodoxin] + O2 + 2 H(+) = an 11beta-hydroxysteroid + 2 oxidized [adrenodoxin] + H2O. The catalysed reaction is 11-deoxycortisol + 2 reduced [adrenodoxin] + O2 + 2 H(+) = cortisol + 2 oxidized [adrenodoxin] + H2O. It catalyses the reaction 21-hydroxyprogesterone + 2 reduced [adrenodoxin] + O2 + 2 H(+) = corticosterone + 2 oxidized [adrenodoxin] + H2O. It carries out the reaction corticosterone + 2 reduced [adrenodoxin] + O2 + 2 H(+) = 18-hydroxycorticosterone + 2 oxidized [adrenodoxin] + H2O. The enzyme catalyses 18-hydroxycorticosterone + 2 reduced [adrenodoxin] + O2 + 2 H(+) = aldosterone + 2 oxidized [adrenodoxin] + 2 H2O. The catalysed reaction is 21-hydroxyprogesterone + 2 reduced [adrenodoxin] + O2 + 2 H(+) = 19-hydroxy-11-deoxycorticosterone + 2 oxidized [adrenodoxin] + H2O. It catalyses the reaction 19-hydroxy-11-deoxycorticosterone + 2 reduced [adrenodoxin] + O2 + 2 H(+) = 19-oxo-11-deoxycorticosterone + 2 oxidized [adrenodoxin] + 2 H2O. It participates in steroid biosynthesis; glucocorticoid biosynthesis. It functions in the pathway steroid hormone biosynthesis. In terms of biological role, a cytochrome P450 monooxygenase that catalyzes the biosynthesis of aldosterone and other adrenal corticoids. Differing from other species (such as human, rat and mice), it is able to catalyze three sequential oxidative reactions of 11-deoxycorticosterone (21-hydroxyprogesterone), namely 11-beta hydroxylation, followed by two successive oxidations at C18 yielding 18-hydroxy and then 18-oxo intermediates, and ending with the formation of aldosterone. Steroid 11beta, 18- and 19-hydroxylase. Mechanistically, uses molecular oxygen inserting one oxygen atom into a substrate and reducing the second into a water molecule. Two electrons are provided by NADPH via a two-protein mitochondrial transfer system comprising flavoprotein FDXR (adrenodoxin/ferredoxin reductase) and nonheme iron-sulfur protein FDX1 or FDX2 (adrenodoxin/ferredoxin). The sequence is that of Cytochrome P450 11B1, mitochondrial (CYP11B1) from Sus scrofa (Pig).